Reading from the N-terminus, the 562-residue chain is Long-chain-fatty-acid--CoA ligase (562 aa).

The protein belongs to the ATP-dependent AMP-binding enzyme family. The cofactor is Mg(2+).

It is found in the membrane. The catalysed reaction is a long-chain fatty acid + ATP + CoA = a long-chain fatty acyl-CoA + AMP + diphosphate. It participates in lipid metabolism; fatty acid beta-oxidation. In terms of biological role, catalyzes the esterification, concomitant with transport, of exogenous long-chain fatty acids into metabolically active CoA thioesters for subsequent degradation or incorporation into phospholipids. The chain is Long-chain-fatty-acid--CoA ligase (fadD) from Haemophilus influenzae (strain ATCC 51907 / DSM 11121 / KW20 / Rd).